The following is a 466-amino-acid chain: MDKKQVTDLRSELLDSRFGAKSISTIAESKRFPLHEMRDDVAFQIINDELYLDGNARQNLATFCQTWDDENVHKLMDLSINKNWIDKEEYPQSAAIDLRCVNMVADLWHAPAPKNGQAVGTNTIGSSEACMLGGMAMKWRWRKRMEAAGKPTDKPNLVCGPVQICWHKFARYWDVELREIPMRPGQLFMDPKRMIEACDENTIGVVPTFGVTYTGNYEFPQPLHDALDKFQADTGIDIDMHIDAASGGFLAPFVAPDIVWDFRLPRVKSISASGHKFGLAPLGCGWVIWRDEEALPQELVFNVDYLGGQIGTFAINFSRPAGQVIAQYYEFLRLGREGYTKVQNASYQVAAYLADEIAKLGPYEFICTGRPDEGIPAVCFKLKDGEDPGYTLYDLSERLRLRGWQVPAFTLGGEATDIVVMRIMCRRGFEMDFAELLLEDYKASLKYLSDHPKLQGIAQQNSFKHT.

Substrate contacts are provided by threonine 62 and asparagine 83. Pyridoxal 5'-phosphate contacts are provided by residues 126–127 (SS), threonine 212, and histidine 275. At lysine 276 the chain carries N6-(pyridoxal phosphate)lysine. An N6-acetyllysine mark is found at lysine 446, lysine 453, and lysine 464.

It belongs to the group II decarboxylase family. As to quaternary structure, homohexamer composed of three dimers. Requires pyridoxal 5'-phosphate as cofactor.

It carries out the reaction L-glutamate + H(+) = 4-aminobutanoate + CO2. Its function is as follows. Converts glutamate to gamma-aminobutyrate (GABA), consuming one intracellular proton in the reaction. The gad system helps to maintain a near-neutral intracellular pH when cells are exposed to extremely acidic conditions. The ability to survive transit through the acidic conditions of the stomach is essential for successful colonization of the mammalian host by commensal and pathogenic bacteria. This is Glutamate decarboxylase beta (gadB) from Shigella flexneri.